A 190-amino-acid polypeptide reads, in one-letter code: Nascent polypeptide-associated complex subunit alpha (190 aa).

Disordered regions lie at residues F20–K42 and S123–K155. A compositionally biased stretch (basic and acidic residues) spans H30 to E40. The NAC-A/B domain maps to S37–A102. Over residues E138–G151 the composition is skewed to acidic residues. Residues V152–A189 form the UBA domain.

Belongs to the NAC-alpha family. In terms of assembly, part of the nascent polypeptide-associated complex (NAC), consisting of EGD2 and EGD1. NAC associates with ribosomes via EGD1.

The protein resides in the cytoplasm. It localises to the nucleus. In terms of biological role, component of the nascent polypeptide-associated complex (NAC), a dynamic component of the ribosomal exit tunnel, protecting the emerging polypeptides from interaction with other cytoplasmic proteins to ensure appropriate nascent protein targeting. The NAC complex also promotes mitochondrial protein import by enhancing productive ribosome interactions with the outer mitochondrial membrane and blocks the inappropriate interaction of ribosomes translating non-secretory nascent polypeptides with translocation sites in the membrane of the endoplasmic reticulum. EGD2 may also be involved in transcription regulation. This chain is Nascent polypeptide-associated complex subunit alpha (EGD2), found in Mycosarcoma maydis (Corn smut fungus).